The following is a 120-amino-acid chain: Spermidine export protein MdtJ (120 aa).

4 helical membrane passes run 1–21, 31–51, 54–74, and 81–101; these read MFYWILLALAIVAEITGTLSM, AGYILMLVMITLSYIFLSFAV, IALGVAYALWEGIGILFITVF, and EVLSTMKIVGLLTLIVGIVLI.

It belongs to the drug/metabolite transporter (DMT) superfamily. Small multidrug resistance (SMR) (TC 2.A.7.1) family. MdtJ subfamily. As to quaternary structure, forms a complex with MdtI.

It is found in the cell inner membrane. Catalyzes the excretion of spermidine. In Salmonella arizonae (strain ATCC BAA-731 / CDC346-86 / RSK2980), this protein is Spermidine export protein MdtJ.